The chain runs to 780 residues: MLKDIRFSYDRGTSWALDGVSLTVHAGERLCLVGPNGSGKSTLARLIAGLTAPDGGEVTLLGQRVYAAGPNADAYRAARHGIGMVFQNPEDQLVTTVLEDDVAFGPENLGLERELIGERIVDSLQAVGLANLRQSDPTRMSGGQQQRASIAGMLAMNPAMLVLDEPTAMLDESARAEVMRILDDLQARGTTIVHVTHHPDETVHADRIVHMEAGRIIGITAAVDNRSPLAEAVSQSETEGSIGTEAAPSRPTNDSPRQREREDGSELPLLSDGIGDMTNPIIRVSHLTYRYPSAKRAVIDDLSFTIARGETVALMGVNGSGKSTLVRMLCALTAPTAGSIEVAGVPVASTGKRGRNVRPKSANRKQLAQLRRHVGYVMQHPEHQLFADTVAEDVAYGPRNQGLGETEVADRVRESLELLHIGHLADRSPFDLSGGQQRLAAIAGVLACNPDVLIMDEPTASLDAQAKKRIHELLRTLKSRGVTVLIITHDREEAEQIADRVVRMPIAAPASGGPVTATVTEPAVSSNGPAHSVIHRLDPRVKMVGFLAAMFTMFAVNTPTQLALGIAITLAVIAAARLNPLRVLESIHPILILLVLMGVVNLFVVRTGTPVVALGPLSITDQGVTIAVLYACRFALVIILGAVFLTTTTPTAMTDAFATLISPLNRLGIHAQEIALVMSLALRFIPTLTDETRAIVDAQSARGGSIETGSLAQRIKAMSAIIVPIFAGTLRHADNLSLALDARCYEEGIRRTHWRALTIAARDLIFAAAVIIYIAAIIAL.

ABC transporter domains follow at residues 2–238 (LKDI…QSET) and 282–531 (IRVS…GPAH). ATP is bound at residue 34 to 41 (GPNGSGKS). Residues 230–272 (AEAVSQSETEGSIGTEAAPSRPTNDSPRQREREDGSELPLLSD) are disordered. 316 to 323 (GVNGSGKS) provides a ligand contact to ATP. 4 consecutive transmembrane segments (helical) span residues 551 to 573 (FTMF…LAVI), 586 to 608 (SIHP…VRTG), 623 to 645 (GVTI…AVFL), and 759 to 778 (IAAR…AAII).

It belongs to the ABC transporter superfamily.

The protein resides in the cell membrane. Functionally, probably part of an ABC transporter complex. Responsible for energy coupling to the transport system. The chain is Putative ABC transporter ATP-binding protein BL0043 from Bifidobacterium longum (strain NCC 2705).